Consider the following 299-residue polypeptide: MKIGHQFHTVALVGRSNTPGIAEPLASLAACIAKRGFEVVFEADTAQALGSTGYPALTPAEIGARADVAVVLGGDGTMLGIGRQLAPYKTPLIGINHGRLGFITDIPASDMQEVVPMMLAGSYEREERTLLEARIVRNNEPIYHALAFNDVVVNRSGFSGMAELRVSVDGRFMYNQRSDGLIVATPTGSTAYALSSQGPILHPQLQGIVLVPIAPHALSNRPIVLPDDSKIAIQIIGGRDVNVNFDMQSFTALELNDTIEVRRSKHTVPFLHPVGYSYYATLRKKLHWNEHPSNEEDDE.

Asp75 serves as the catalytic Proton acceptor. Residues 75 to 76, 149 to 150, Arg177, Asp179, 190 to 195, Ala214, and Gln248 each bind NAD(+); these read DG, ND, and TAYALS.

The protein belongs to the NAD kinase family. A divalent metal cation serves as cofactor.

Its subcellular location is the cytoplasm. It catalyses the reaction NAD(+) + ATP = ADP + NADP(+) + H(+). Involved in the regulation of the intracellular balance of NAD and NADP, and is a key enzyme in the biosynthesis of NADP. Catalyzes specifically the phosphorylation on 2'-hydroxyl of the adenosine moiety of NAD to yield NADP. This Burkholderia thailandensis (strain ATCC 700388 / DSM 13276 / CCUG 48851 / CIP 106301 / E264) protein is NAD kinase.